Here is a 1160-residue protein sequence, read N- to C-terminus: MSEPRFVHLRVHSDYSMIDGLAKTAPLVKKAAALGMPALAITDFTNLCGLVKFYGAGHGAGIKPIVGADFNVQCDLLGDELTHLTVLAANNTGYQNLTLLISKAYQRGYGAAGPIIDRDWLIELNEGLILLSGGRMGDVGRSLLRGNSALVDECVAFYEEHFPDRYFLELIRTGRPDEESYLHAAVELAEARGLPVVATNDVRFIDSSDFDAHEIRVAIHDGFTLDDPKRPRNYSPQQYMRSEEEMCELFADIPEALANTVEIAKRCNVTVRLGEYFLPQFPTGDMSTEDYLVKRAKEGLEERLAFLFPDEEERLKRRPEYDERLETELQVINQMGFPGYFLIVMEFIQWSKDNGVPVGPGRGSGAGSLVAYALKITDLDPLEFDLLFERFLNPERVSMPDFDVDFCMEKRDQVIEHVADMYGRDAVSQIITFGTMAAKAVIRDVGRVLGHPYGFVDRISKLIPPDPGMTLAKAFEAEPQLPEIYEADEEVKALIDMARKLEGVTRNAGKHAGGVVIAPTKITDFAPLYCDEEGKHPVTQFDKSDVEYAGLVKFDFLGLRTLTIINWALEMINKRRAKNGEPPLDIAAIPLDDKKSFDMLQRSETTAVFQLESRGMKDLIKRLQPDCFEDMIALVALFRPGPLQSGMVDNFIDRKHGREEISYPDVQWQHESLKPVLEPTYGIILYQEQVMQIAQVLSGYTLGGADMLRRAMGKKKPEEMAKQRSVFAEGAEKNGINAELAMKIFDLVEKFAGYGFNKSHSAAYALVSYQTLWLKAHYPAEFMAAVMTADMDNTEKVVGLVDECWRMGLKILPPDINSGLYHFHVNDDGEIVYGIGAIKGVGEGPIEAIIEARNKGGYFRELFDLCARTDTKKLNRRVLEKLIMSGAFDRLGPHRAALMNSLGDALKAADQHAKAEAIGQADMFGVLAEEPEQIEQSYASCQPWPEQVVLDGERETLGLYLTGHPINQYLKEIERYVGGVRLKDMHPTERGKVITAAGLVVAARVMVTKRGNRIGICTLDDRSGRLEVMLFTDALDKYQQLLEKDRILIVSGQVSFDDFSGGLKMTAREVMDIDEAREKYARGLAISLTDRQIDDQLLNRLRQSLEPHRSGTIPVHLYYQRADARARLRFGATWRVSPSDRLLNDLRGLIGSEQVELEFD.

It belongs to the DNA polymerase type-C family. DnaE subfamily. The DNA polymerase III holoenzyme complex contains at least 10 different subunits organized into 3 functionally essential subassemblies: the Pol III core, the beta sliding clamp processivity factor and the clamp-loading complex. The Pol III core (subunits alpha, epsilon and theta) contains the polymerase and the 3'-5' exonuclease proofreading activities. The polymerase is tethered to the template via the dimeric beta sliding clamp processivity factor. The clamp loader (also called gamma complex) assembles the beta sliding clamp onto the primed template and plays a central role in the organization and communication at the replication fork. The clamp-loading complex contains delta, delta', psi and chi, and 3 copies of either or both of two different DnaX proteins, gamma and tau. The DNA replisome complex has a single clamp loader (3 tau and 1 each of delta, delta', psi and chi subunits) which binds 3 Pol III cores (1 core on the leading strand and 2 on the lagging strand) each with a beta sliding clamp dimer. Additional proteins in the replisome are other copies of gamma, psi and chi, Ssb, DNA helicase and RNA primase. Interacts with the beta sliding-clamp subunit via the peptide Gln-Ala-Asp-Met-Phe (residues 920-924).

The protein localises to the cytoplasm. The catalysed reaction is DNA(n) + a 2'-deoxyribonucleoside 5'-triphosphate = DNA(n+1) + diphosphate. Its function is as follows. DNA polymerase III is a complex, multichain enzyme responsible for most of the replicative synthesis in bacteria. This DNA polymerase also exhibits 3' to 5' exonuclease activity. The alpha chain is the DNA polymerase catalytic subunit. It is tethered to replicating DNA by the beta sliding clamp (dnaN), which confers extremely high processivity to the catalytic subunit, copying a 5.4 kb genome in 11 seconds, a speed of at least 500 nucleotides/second at 30 degrees Celsius. The protein is DNA polymerase III subunit alpha (dnaE) of Escherichia coli (strain K12).